The sequence spans 138 residues: Basic phospholipase A2 beta-bungarotoxin A-AL3 chain (138 aa).

The N-terminal stretch at 1–10 is a signal peptide; the sequence is LAVCVSLIGA. A propeptide spanning residues 11-18 is cleaved from the precursor; it reads ANIPPQHL. 6 disulfides stabilise this stretch: C45–C137, C47–C63, C62–C118, C69–C111, C79–C104, and C97–C109. Residues Y46, G48, and G50 each coordinate Ca(2+). H66 is an active-site residue. D67 contributes to the Ca(2+) binding site. D112 is an active-site residue.

This sequence belongs to the phospholipase A2 family. Group I subfamily. D49 sub-subfamily. In terms of assembly, heterodimer; disulfide-linked. The A chains have phospholipase A2 activity and the B chains show homology with the basic protease inhibitors. Ca(2+) is required as a cofactor. As to expression, expressed by the venom gland.

It is found in the secreted. It carries out the reaction a 1,2-diacyl-sn-glycero-3-phosphocholine + H2O = a 1-acyl-sn-glycero-3-phosphocholine + a fatty acid + H(+). Functionally, snake venom phospholipase A2 (PLA2) that inhibits neuromuscular transmission by blocking acetylcholine release from the nerve termini. PLA2 catalyzes the calcium-dependent hydrolysis of the 2-acyl groups in 3-sn-phosphoglycerides. In Bungarus multicinctus (Many-banded krait), this protein is Basic phospholipase A2 beta-bungarotoxin A-AL3 chain.